Reading from the N-terminus, the 79-residue chain is Acyl carrier protein (79 aa).

A Carrier domain is found at 2 to 77 (SDIEARVRKI…HAIDYIKSNA (76 aa)). At S37 the chain carries O-(pantetheine 4'-phosphoryl)serine.

It belongs to the acyl carrier protein (ACP) family. 4'-phosphopantetheine is transferred from CoA to a specific serine of apo-ACP by AcpS. This modification is essential for activity because fatty acids are bound in thioester linkage to the sulfhydryl of the prosthetic group.

Its subcellular location is the cytoplasm. The protein operates within lipid metabolism; fatty acid biosynthesis. Carrier of the growing fatty acid chain in fatty acid biosynthesis. The sequence is that of Acyl carrier protein from Xylella fastidiosa (strain M23).